A 208-amino-acid polypeptide reads, in one-letter code: Protein-L-isoaspartate O-methyltransferase (208 aa).

Ser59 is a catalytic residue.

It belongs to the methyltransferase superfamily. L-isoaspartyl/D-aspartyl protein methyltransferase family.

Its subcellular location is the cytoplasm. It catalyses the reaction [protein]-L-isoaspartate + S-adenosyl-L-methionine = [protein]-L-isoaspartate alpha-methyl ester + S-adenosyl-L-homocysteine. In terms of biological role, catalyzes the methyl esterification of L-isoaspartyl residues in peptides and proteins that result from spontaneous decomposition of normal L-aspartyl and L-asparaginyl residues. It plays a role in the repair and/or degradation of damaged proteins. This Erwinia tasmaniensis (strain DSM 17950 / CFBP 7177 / CIP 109463 / NCPPB 4357 / Et1/99) protein is Protein-L-isoaspartate O-methyltransferase.